An 83-amino-acid polypeptide reads, in one-letter code: Cytochrome b559 subunit alpha (83 aa).

Residues 21 to 35 (VIHSITIPSLFIAGW) form a helical membrane-spanning segment. His-23 provides a ligand contact to heme.

It belongs to the PsbE/PsbF family. Heterodimer of an alpha subunit and a beta subunit. PSII is composed of 1 copy each of membrane proteins PsbA, PsbB, PsbC, PsbD, PsbE, PsbF, PsbH, PsbI, PsbJ, PsbK, PsbL, PsbM, PsbT, PsbX, PsbY, PsbZ, Psb30/Ycf12, at least 3 peripheral proteins of the oxygen-evolving complex and a large number of cofactors. It forms dimeric complexes. It depends on heme b as a cofactor.

It localises to the plastid. Its subcellular location is the chloroplast thylakoid membrane. Functionally, this b-type cytochrome is tightly associated with the reaction center of photosystem II (PSII). PSII is a light-driven water:plastoquinone oxidoreductase that uses light energy to abstract electrons from H(2)O, generating O(2) and a proton gradient subsequently used for ATP formation. It consists of a core antenna complex that captures photons, and an electron transfer chain that converts photonic excitation into a charge separation. This Chlorella vulgaris (Green alga) protein is Cytochrome b559 subunit alpha.